We begin with the raw amino-acid sequence, 630 residues long: Pentatricopeptide repeat-containing protein At1g62670, mitochondrial (630 aa).

The N-terminal 22 residues, 1–22 (MRISFAIASTAKRFVHRSLVVR), are a transit peptide targeting the mitochondrion. PPR repeat units lie at residues 44–79 (TSYD…RPFP), 80–114 (SIIE…GIPH), 115–149 (NHYT…GYEP), 150–184 (NIVT…GYQP), 185–219 (NTVT…GCQP), 220–254 (DLVT…KLEP), 255–289 (GVLI…GIRP), 290–324 (NVVT…KINP), 325–359 (DVFT…SIDP), 360–394 (SIVT…HCFP), 395–429 (DVVT…GLVG), 430–464 (NTVT…GVPP), 465–499 (NIMT…KMEP), 500–534 (TIYT…GVKP), 535–569 (DVVA…GTLP), and 570–604 (NSGC…GFAG).

This sequence belongs to the PPR family. P subfamily.

It is found in the mitochondrion. This is Pentatricopeptide repeat-containing protein At1g62670, mitochondrial from Arabidopsis thaliana (Mouse-ear cress).